The following is an 831-amino-acid chain: MNHRIEDITSNPSSPSPNSPFSSPQVSLQPSIIQNGLNSNNSLLNGNNFNLNGNITSSPSTSSSPPISTTTTTTTTTTTTATAKKTNSKEKKKTTNKDNNNNNNNNNSNNQQQQQQQQQQQQQQQQQQQYEEEDDDEEDEGGDDNTKVGKGEKMKARRTNQNIASRNYRQRKKVYIKEMEDKINSLTLENDSLKKDLYKIGNNPLELLKFSQEVVFLMTQIRRLVFQIDQALRNSEPDSSIKSLLNTWQSTMDQASSINEREIERFVHPYTQAKLTVMGYKPHTNPWTDFIKTPGQEDWWTKYAEKANLSSDQLEQINNLWLRFDEEERVLQKELTDLDEYIKKFFLTKIIIMPDTEKLNDIISSCLPIPENHDGDILQTSEVLEFIYNLEKLKQKFIKVQRLTWDTSKQMSKYLTVRQEAFLLVLVHSNTKYIHTNMDMTNNLWNQLNHSALSKTPSTYLLGGVHSSSSSSSSSSSSMSSSTSRILNNHGIPTPLSSSNSSPSSLSASSSIGESIHSYSQLPNVVQPIQTQPSSMFTPLPGAKPLKNQQPIDDLFFGTIPLSQVPLSFQQNSNMALFSNYRNFTQQQAQQQQQQQQQQHAQQHAQQQAQQQAHLQAQIQAQIMQQAQQIHQVQQAQQASQQAAQQAAQQAAAQQAAQQQAAQQQSPIQTQLSPPQHITPQHTPQQHIQQQQQHQNYQGTEPHLLGEFMFFNSIDATNSNNNNNNNNNNNNNNNNNNNNNNNNNNNNNNNSTPIDQLNEYRPDYNNNNTNKILPNIIQSLSASSNNSLFSHQHQQQNSQSPTLPPSQNDSVQFHFYQPIHQNNQNNQNHNN.

Disordered regions lie at residues 1–33 (MNHR…PSII) and 54–166 (NITS…IASR). Over residues 54–85 (NITSSPSTSSSPPISTTTTTTTTTTTTATAKK) the composition is skewed to low complexity. Basic and acidic residues predominate over residues 87–96 (NSKEKKKTTN). The segment covering 97 to 129 (KDNNNNNNNNNSNNQQQQQQQQQQQQQQQQQQQ) has biased composition (low complexity). The stretch at 101 to 141 (NNNNNNNSNNQQQQQQQQQQQQQQQQQQQYEEEDDDEEDEG) forms a coiled coil. Acidic residues predominate over residues 130 to 143 (YEEEDDDEEDEGGD). Residues 144–154 (DNTKVGKGEKM) show a composition bias toward basic and acidic residues. The 64-residue stretch at 151-214 (GEKMKARRTN…LELLKFSQEV (64 aa)) folds into the bZIP domain. The basic motif stretch occupies residues 153 to 173 (KMKARRTNQNIASRNYRQRKK). Residues 176–183 (IKEMEDKI) are leucine-zipper. Low complexity-rich tracts occupy residues 469–484 (SSSS…SSTS) and 497–510 (SSSN…SASS). Disordered stretches follow at residues 469 to 510 (SSSS…SASS), 658 to 697 (QQQA…HQNY), 715 to 771 (DATN…NTNK), and 787 to 810 (SLFS…QNDS). Positions 601 to 664 (AQQHAQQQAQ…QAAQQQAAQQ (64 aa)) form a coiled coil. Low complexity-rich tracts occupy residues 674–695 (PPQH…QQHQ), 720–750 (NNNN…NNNN), and 787–800 (SLFS…NSQS).

This sequence belongs to the bZIP family.

It localises to the nucleus. Its function is as follows. Probable transcriptional regulator. This chain is Probable basic-leucine zipper transcription factor P (bzpP), found in Dictyostelium discoideum (Social amoeba).